Consider the following 154-residue polypeptide: Protein X (154 aa).

A mitochondrial targeting sequence region spans residues 68–117 (PCALRFTSARCMETTVNAHQILPKVLHKRTLGLPAMSTTDLEAYFKDSVF).

This sequence belongs to the orthohepadnavirus protein X family. In terms of assembly, may form homodimer. May interact with host CEBPA, CFLAR, CREB1, DDB1, E4F1, HBXIP, HSPD1/HSP60, NFKBIA, POLR2E and SMAD4. Interacts with host SMC5-SMC6 complex and induces its degradation. Interacts with host TRPC4AP; leading to prevent ubiquitination of TRPC4AP. Interacts with host PLSCR1; this interaction promotes ubiquitination and degradation of HBx and impairs HBx-mediated cell proliferation. In terms of processing, a fraction may be phosphorylated in insect cells and HepG2 cells, a human hepatoblastoma cell line. Phosphorylated in vitro by host protein kinase C or mitogen-activated protein kinase. N-acetylated in insect cells.

Its subcellular location is the host cytoplasm. The protein resides in the host nucleus. It localises to the host mitochondrion. Multifunctional protein that plays a role in silencing host antiviral defenses and promoting viral transcription. Does not seem to be essential for HBV infection. May be directly involved in development of cirrhosis and liver cancer (hepatocellular carcinoma). Most of cytosolic activities involve modulation of cytosolic calcium. The effect on apoptosis is controversial depending on the cell types in which the studies have been conducted. May induce apoptosis by localizing in mitochondria and causing loss of mitochondrial membrane potential. May also modulate apoptosis by binding host CFLAR, a key regulator of the death-inducing signaling complex (DISC). Promotes viral transcription by using the host E3 ubiquitin ligase DDB1 to target the SMC5-SMC6 complex to proteasomal degradation. This host complex would otherwise bind to viral episomal DNA, and prevents its transcription. Moderately stimulates transcription of many different viral and cellular transcription elements. Promoters and enhancers stimulated by HBx contain DNA binding sites for NF-kappa-B, AP-1, AP-2, c-EBP, ATF/CREB, or the calcium-activated factor NF-AT. The sequence is that of Protein X from Homo sapiens (Human).